We begin with the raw amino-acid sequence, 357 residues long: Protein RecA (357 aa).

79-86 (GPESSGKT) is a binding site for ATP.

The protein belongs to the RecA family.

The protein resides in the cytoplasm. In terms of biological role, can catalyze the hydrolysis of ATP in the presence of single-stranded DNA, the ATP-dependent uptake of single-stranded DNA by duplex DNA, and the ATP-dependent hybridization of homologous single-stranded DNAs. It interacts with LexA causing its activation and leading to its autocatalytic cleavage. The chain is Protein RecA from Chloroherpeton thalassium (strain ATCC 35110 / GB-78).